Consider the following 125-residue polypeptide: Small ribosomal subunit protein uS12 (125 aa).

Residues 9–31 (RQGREVEKIKSKSPAMENSPQRR) are disordered. Asp89 carries the post-translational modification 3-methylthioaspartic acid. The segment at 106 to 125 (GVKDRKQSRSKYGAKRPKKA) is disordered. Positions 113–125 (SRSKYGAKRPKKA) are enriched in basic residues.

Belongs to the universal ribosomal protein uS12 family. In terms of assembly, part of the 30S ribosomal subunit. Contacts proteins S8 and S17. May interact with IF1 in the 30S initiation complex.

Functionally, with S4 and S5 plays an important role in translational accuracy. Its function is as follows. Interacts with and stabilizes bases of the 16S rRNA that are involved in tRNA selection in the A site and with the mRNA backbone. Located at the interface of the 30S and 50S subunits, it traverses the body of the 30S subunit contacting proteins on the other side and probably holding the rRNA structure together. The combined cluster of proteins S8, S12 and S17 appears to hold together the shoulder and platform of the 30S subunit. This Polaromonas sp. (strain JS666 / ATCC BAA-500) protein is Small ribosomal subunit protein uS12.